Here is a 262-residue protein sequence, read N- to C-terminus: DNA repair protein RecO (262 aa).

It belongs to the RecO family.

Functionally, involved in DNA repair and RecF pathway recombination. This is DNA repair protein RecO from Acidovorax ebreus (strain TPSY) (Diaphorobacter sp. (strain TPSY)).